Reading from the N-terminus, the 178-residue chain is Probable DNA-directed RNA polymerase subunit delta (178 aa).

In terms of domain architecture, HTH HARE-type spans Lys-14 to Trp-81. A disordered region spans residues Leu-114–Asp-178. Residues Asp-116 to Asp-178 are compositionally biased toward acidic residues.

It belongs to the RpoE family. In terms of assembly, RNAP is composed of a core of 2 alpha, a beta and a beta' subunits. The core is associated with a delta subunit and one of several sigma factors.

Participates in both the initiation and recycling phases of transcription. In the presence of the delta subunit, RNAP displays an increased specificity of transcription, a decreased affinity for nucleic acids, and an increased efficiency of RNA synthesis because of enhanced recycling. This is Probable DNA-directed RNA polymerase subunit delta from Staphylococcus epidermidis (strain ATCC 35984 / DSM 28319 / BCRC 17069 / CCUG 31568 / BM 3577 / RP62A).